Here is a 319-residue protein sequence, read N- to C-terminus: Aspartate carbamoyltransferase catalytic subunit (319 aa).

2 residues coordinate carbamoyl phosphate: Arg-65 and Thr-66. Lys-93 serves as a coordination point for L-aspartate. Residues Arg-115, His-149, and Gln-152 each coordinate carbamoyl phosphate. L-aspartate-binding residues include Arg-182 and Arg-237. Gly-278 and Pro-279 together coordinate carbamoyl phosphate.

Belongs to the aspartate/ornithine carbamoyltransferase superfamily. ATCase family. In terms of assembly, heterododecamer (2C3:3R2) of six catalytic PyrB chains organized as two trimers (C3), and six regulatory PyrI chains organized as three dimers (R2).

It carries out the reaction carbamoyl phosphate + L-aspartate = N-carbamoyl-L-aspartate + phosphate + H(+). It functions in the pathway pyrimidine metabolism; UMP biosynthesis via de novo pathway; (S)-dihydroorotate from bicarbonate: step 2/3. Catalyzes the condensation of carbamoyl phosphate and aspartate to form carbamoyl aspartate and inorganic phosphate, the committed step in the de novo pyrimidine nucleotide biosynthesis pathway. This chain is Aspartate carbamoyltransferase catalytic subunit, found in Janthinobacterium sp. (strain Marseille) (Minibacterium massiliensis).